The following is a 790-amino-acid chain: Sorting nexin mvp1 (790 aa).

Composition is skewed to polar residues over residues 1–10 (MSLFGSSPPN) and 20–40 (KTAN…TRSG). Disordered regions lie at residues 1 to 62 (MSLF…RKQR), 215 to 342 (PNLS…SIHN), and 373 to 406 (AITG…HVRS). Residues 225–240 (PQRPVTPPKAPTPSPP) are compositionally biased toward pro residues. A compositionally biased stretch (low complexity) spans 241-252 (KQQQQQQHQPPT). Basic and acidic residues predominate over residues 269–283 (DLHKGHNHGPLEHST). Over residues 297–319 (NDLNGNDAVSYSTSPEVTTTSSA) the composition is skewed to polar residues. Low complexity-rich tracts occupy residues 324–339 (TTST…GPSS) and 386–400 (QSVS…PNRS). Residues 411 to 525 (EENILVTLMP…IMFLTVPTEL (115 aa)) form the PX domain. The a 1,2-diacyl-sn-glycero-3-phospho-(1D-myo-inositol-3-phosphate) site is built by arginine 447, serine 449, lysine 473, and arginine 492.

The protein belongs to the sorting nexin family.

The protein localises to the cytoplasm. It is found in the membrane. In terms of biological role, required for vacuolar protein sorting. In Neurospora crassa (strain ATCC 24698 / 74-OR23-1A / CBS 708.71 / DSM 1257 / FGSC 987), this protein is Sorting nexin mvp1 (vsp-1).